Reading from the N-terminus, the 93-residue chain is Cell division protein FtsB (93 aa).

Over 1–3 (MRL) the chain is Cytoplasmic. The helical transmembrane segment at 4–21 (FILSLFALLVMFQYDFWF) threads the bilayer. The Periplasmic portion of the chain corresponds to 22-93 (GKNGYLDYQD…FYRIVKNKNR (72 aa)). Positions 28 to 76 (DYQDIKAEIIQRKQENKKLSQRNQTIFAEIQDLKNGIEAIEERARMEHE) form a coiled coil.

The protein belongs to the FtsB family. Part of a complex composed of FtsB, FtsL and FtsQ.

It is found in the cell inner membrane. Functionally, essential cell division protein. May link together the upstream cell division proteins, which are predominantly cytoplasmic, with the downstream cell division proteins, which are predominantly periplasmic. The protein is Cell division protein FtsB of Histophilus somni (strain 129Pt) (Haemophilus somnus).